A 462-amino-acid polypeptide reads, in one-letter code: Chitinase 1 (462 aa).

The first 17 residues, 1 to 17 (MILNLIILLAISIVASA), serve as a signal peptide directing secretion. The GH18 domain maps to 18-291 (SNIAAYWGQN…NQLYQALSGS (274 aa)). A glycan (N-linked (GlcNAc...) asparagine) is linked at Asn57. Glu147 acts as the Proton donor in catalysis.

Belongs to the glycosyl hydrolase 18 family. Chitinase class III subfamily.

It localises to the secreted. It catalyses the reaction Random endo-hydrolysis of N-acetyl-beta-D-glucosaminide (1-&gt;4)-beta-linkages in chitin and chitodextrins.. This Candida albicans (Yeast) protein is Chitinase 1 (CHT1).